A 302-amino-acid chain; its full sequence is Heme A synthase (302 aa).

The Cytoplasmic segment spans residues 1 to 6 (MNKALK). Residues 7–27 (GLGIITTIAMLFVLIGGALVT) form a helical membrane-spanning segment. Topologically, residues 28-61 (KTGSGMGCGRSWPLCNGSIFPALTLESIIEWSHR) are extracellular. A disulfide bond links Cys35 and Cys42. The active site involves Glu57. Heme o is bound at residue His60. A helical transmembrane segment spans residues 62–82 (FVSGTSGVLVLALAIWTWKKI). The Cytoplasmic segment spans residues 83–91 (GHIRETKFL). A helical membrane pass occupies residues 92–112 (AVMSVVFLILQALLGAAAVVF). Over 113–120 (GSSALIMA) the chain is Extracellular. A helical transmembrane segment spans residues 121-141 (LHFGISLISFASVLLLTLLVF). Position 122 (His122) interacts with heme o. At 142-158 (EADSKQKSESFYIGKTM) the chain is on the cytoplasmic side. The helical transmembrane segment at 159-179 (QFHMIGIIIYTYVVVYTGAYV) threads the bilayer. The Extracellular segment spans residues 180 to 208 (RHTSSSLACLDFPMCSTENGWLPGKFHEW). Cys188 and Cys194 are joined by a disulfide. Residues 209–229 (VQMGHRAAALLLFAWIIAAAV) traverse the membrane as a helical segment. His213 contacts heme b. The Cytoplasmic portion of the chain corresponds to 230–242 (HAARQYKNQKRIY). A helical membrane pass occupies residues 243–263 (WGWMISLILIILQAASGIAVV). The Extracellular segment spans residues 264-272 (YSRLDLGFA). The chain crosses the membrane as a helical span at residues 273–293 (LAHAFFISCLFGILCYFLLLV). Residue His275 participates in heme b binding. Residues 294–302 (ARYRRQVQK) lie on the Cytoplasmic side of the membrane.

The protein belongs to the COX15/CtaA family. Type 1 subfamily. In terms of assembly, interacts with CtaB. Requires heme b as cofactor.

The protein resides in the cell membrane. It catalyses the reaction Fe(II)-heme o + 2 A + H2O = Fe(II)-heme a + 2 AH2. Its pathway is porphyrin-containing compound metabolism; heme A biosynthesis; heme A from heme O: step 1/1. In terms of biological role, catalyzes the conversion of heme O to heme A by two successive hydroxylations of the methyl group at C8. The first hydroxylation forms heme I, the second hydroxylation results in an unstable dihydroxymethyl group, which spontaneously dehydrates, resulting in the formyl group of heme A. This chain is Heme A synthase, found in Bacillus licheniformis (strain ATCC 14580 / DSM 13 / JCM 2505 / CCUG 7422 / NBRC 12200 / NCIMB 9375 / NCTC 10341 / NRRL NRS-1264 / Gibson 46).